Here is a 282-residue protein sequence, read N- to C-terminus: Protoheme IX farnesyltransferase (282 aa).

8 helical membrane passes run 40–60, 87–107, 108–128, 135–157, 162–184, 204–224, 228–248, and 261–281; these read LVLA…FNMV, AVLA…AVNP, YVFV…TVLL, SVVF…ATGG, GVLL…STYY, AGVV…FLAF, LISA…VAVL, and AYRA…LLVL.

The protein belongs to the UbiA prenyltransferase family. Protoheme IX farnesyltransferase subfamily.

The protein resides in the cell membrane. The catalysed reaction is heme b + (2E,6E)-farnesyl diphosphate + H2O = Fe(II)-heme o + diphosphate. It participates in porphyrin-containing compound metabolism; heme O biosynthesis; heme O from protoheme: step 1/1. Functionally, converts heme B (protoheme IX) to heme O by substitution of the vinyl group on carbon 2 of heme B porphyrin ring with a hydroxyethyl farnesyl side group. This chain is Protoheme IX farnesyltransferase, found in Thermofilum pendens (strain DSM 2475 / Hrk 5).